The primary structure comprises 328 residues: MIEKIWSGESPLWRLLLPLSWLYGLVSGAIRLCYKLKLKRAWRAPIPVVVVGNLTAGGNGKTPVVVWLVEQLQQRGIRVGVVSRGYGGKAESYPLLLSADTTTAQAGDEPVLIYQRTGAPVAVSPVRSDAVKAILAQHPDVQIIVTDDGLQHYRLARDVEIVAIDGVRRFGNGWWLPAGPMRERAGRLKSVDAVIVNGGVPRSGEIPMHLLPGQAVNLRTGTRCDVAQLEHVVAIAGIGHPPRFFATLKMCGVQPEKCVPLADHQSLNHADVSALVSAGQTLVMTEKDAVKCRAFAEENWWYLPVDAQLSGDEPAKLLAQLTSLASGH.

55-62 provides a ligand contact to ATP; sequence TAGGNGKT.

It belongs to the LpxK family.

The catalysed reaction is a lipid A disaccharide + ATP = a lipid IVA + ADP + H(+). It participates in glycolipid biosynthesis; lipid IV(A) biosynthesis; lipid IV(A) from (3R)-3-hydroxytetradecanoyl-[acyl-carrier-protein] and UDP-N-acetyl-alpha-D-glucosamine: step 6/6. In terms of biological role, transfers the gamma-phosphate of ATP to the 4'-position of a tetraacyldisaccharide 1-phosphate intermediate (termed DS-1-P) to form tetraacyldisaccharide 1,4'-bis-phosphate (lipid IVA). This Escherichia coli O6:K15:H31 (strain 536 / UPEC) protein is Tetraacyldisaccharide 4'-kinase.